Reading from the N-terminus, the 184-residue chain is Large ribosomal subunit protein uL15 (184 aa).

The segment at 1 to 45 is disordered; sequence MNLSSLRPAKGSVRNKKRVGRGQGSGNGTTAGKGNKGQQARSGYK. A compositionally biased stretch (gly residues) spans 21–35; sequence RGQGSGNGTTAGKGN.

Belongs to the universal ribosomal protein uL15 family. In terms of assembly, part of the 50S ribosomal subunit.

In terms of biological role, binds to the 23S rRNA. This is Large ribosomal subunit protein uL15 from Chlorobium chlorochromatii (strain CaD3).